The chain runs to 288 residues: MTDNKTVPNGAPILYIVPTPIGNLGDITQRALDVLASVDMIAVEDTRHTGKLLAHFNISTKTFALHDHNEQQKAQVLVDKLLSGLSIALVSDAGTPLISDPGYHLVTQCRQAGVKVVPLPGPCAVITALSASGLPSDSFSFEGFLPAKSKARKDKLLEIAKVSRTCIFYESPHRICESLQDMLDVLGGEREVVLARELTKTFETIQGMPLAELITWIAEDDNRKKGEMVLLVHGYRDAGEQQLPDEALRTLTILTKELPLKKAAALVAEIHQLKKNALYKWGLENLGE.

It belongs to the methyltransferase superfamily. RsmI family.

The protein localises to the cytoplasm. The enzyme catalyses cytidine(1402) in 16S rRNA + S-adenosyl-L-methionine = 2'-O-methylcytidine(1402) in 16S rRNA + S-adenosyl-L-homocysteine + H(+). Its function is as follows. Catalyzes the 2'-O-methylation of the ribose of cytidine 1402 (C1402) in 16S rRNA. In Vibrio cholerae serotype O1 (strain ATCC 39315 / El Tor Inaba N16961), this protein is Ribosomal RNA small subunit methyltransferase I.